A 69-amino-acid chain; its full sequence is NAD(P)H-quinone oxidoreductase subunit O (69 aa).

Belongs to the complex I NdhO subunit family. As to quaternary structure, NDH-1 can be composed of about 15 different subunits; different subcomplexes with different compositions have been identified which probably have different functions.

Its subcellular location is the cellular thylakoid membrane. It carries out the reaction a plastoquinone + NADH + (n+1) H(+)(in) = a plastoquinol + NAD(+) + n H(+)(out). It catalyses the reaction a plastoquinone + NADPH + (n+1) H(+)(in) = a plastoquinol + NADP(+) + n H(+)(out). NDH-1 shuttles electrons from an unknown electron donor, via FMN and iron-sulfur (Fe-S) centers, to quinones in the respiratory and/or the photosynthetic chain. The immediate electron acceptor for the enzyme in this species is believed to be plastoquinone. Couples the redox reaction to proton translocation, and thus conserves the redox energy in a proton gradient. Cyanobacterial NDH-1 also plays a role in inorganic carbon-concentration. The chain is NAD(P)H-quinone oxidoreductase subunit O from Acaryochloris marina (strain MBIC 11017).